A 125-amino-acid polypeptide reads, in one-letter code: Large ribosomal subunit protein bL17 (125 aa).

This sequence belongs to the bacterial ribosomal protein bL17 family. Part of the 50S ribosomal subunit. Contacts protein L32.

In Blochmanniella floridana, this protein is Large ribosomal subunit protein bL17.